The following is a 76-amino-acid chain: Defensin-like protein 164 (76 aa).

The N-terminal stretch at 1 to 25 is a signal peptide; that stretch reads MAKLLCSYLFICMFVLSGFLVFSSA. 4 disulfide bridges follow: Cys-31/Cys-76, Cys-41/Cys-61, Cys-46/Cys-70, and Cys-50/Cys-72.

This sequence belongs to the DEFL family.

The protein localises to the secreted. This chain is Defensin-like protein 164 (LCR38), found in Arabidopsis thaliana (Mouse-ear cress).